The chain runs to 268 residues: uncharacterized protein (268 aa).

The segment at 45-64 (SDTQGPAPGINGQGKPSPGA) is disordered.

This is an uncharacterized protein from Aquifex aeolicus (strain VF5).